The primary structure comprises 463 residues: Argininosuccinate lyase (463 aa).

This sequence belongs to the lyase 1 family. Argininosuccinate lyase subfamily.

It localises to the cytoplasm. It carries out the reaction 2-(N(omega)-L-arginino)succinate = fumarate + L-arginine. Its pathway is amino-acid biosynthesis; L-arginine biosynthesis; L-arginine from L-ornithine and carbamoyl phosphate: step 3/3. The protein is Argininosuccinate lyase of Bacillus cereus (strain AH187).